The following is a 117-amino-acid chain: Large ribosomal subunit protein bL20 (117 aa).

This sequence belongs to the bacterial ribosomal protein bL20 family.

Binds directly to 23S ribosomal RNA and is necessary for the in vitro assembly process of the 50S ribosomal subunit. It is not involved in the protein synthesizing functions of that subunit. The polypeptide is Large ribosomal subunit protein bL20 (Natranaerobius thermophilus (strain ATCC BAA-1301 / DSM 18059 / JW/NM-WN-LF)).